The chain runs to 198 residues: Imidazoleglycerol-phosphate dehydratase (198 aa).

This sequence belongs to the imidazoleglycerol-phosphate dehydratase family.

The protein resides in the cytoplasm. It carries out the reaction D-erythro-1-(imidazol-4-yl)glycerol 3-phosphate = 3-(imidazol-4-yl)-2-oxopropyl phosphate + H2O. Its pathway is amino-acid biosynthesis; L-histidine biosynthesis; L-histidine from 5-phospho-alpha-D-ribose 1-diphosphate: step 6/9. In Agrobacterium fabrum (strain C58 / ATCC 33970) (Agrobacterium tumefaciens (strain C58)), this protein is Imidazoleglycerol-phosphate dehydratase.